A 404-amino-acid polypeptide reads, in one-letter code: Cysteine desulfurase IscS (404 aa).

Pyridoxal 5'-phosphate-binding positions include 75 to 76 (AT), Asn-155, Gln-183, and 203 to 205 (SGH). Lys-206 carries the post-translational modification N6-(pyridoxal phosphate)lysine. Thr-243 contributes to the pyridoxal 5'-phosphate binding site. Cys-328 acts as the Cysteine persulfide intermediate in catalysis. A [2Fe-2S] cluster-binding site is contributed by Cys-328.

This sequence belongs to the class-V pyridoxal-phosphate-dependent aminotransferase family. NifS/IscS subfamily. As to quaternary structure, homodimer. Forms a heterotetramer with IscU, interacts with other sulfur acceptors. It depends on pyridoxal 5'-phosphate as a cofactor.

The protein resides in the cytoplasm. The enzyme catalyses (sulfur carrier)-H + L-cysteine = (sulfur carrier)-SH + L-alanine. It functions in the pathway cofactor biosynthesis; iron-sulfur cluster biosynthesis. Functionally, master enzyme that delivers sulfur to a number of partners involved in Fe-S cluster assembly, tRNA modification or cofactor biosynthesis. Catalyzes the removal of elemental sulfur atoms from cysteine to produce alanine. Functions as a sulfur delivery protein for Fe-S cluster synthesis onto IscU, an Fe-S scaffold assembly protein, as well as other S acceptor proteins. The polypeptide is Cysteine desulfurase IscS (Shewanella pealeana (strain ATCC 700345 / ANG-SQ1)).